A 643-amino-acid chain; its full sequence is Type VI secretion system spike protein VgrG1a (643 aa).

This sequence belongs to the VgrG protein family. Forms homotrimers. Part of the type VI secretion system (T6SS). Interacts with EagT6 and Tse6; these interactions are required for Tse6 loading onto VgrG1. Interacts with Hcp1.

The protein localises to the secreted. In terms of biological role, part of the H1 type VI secretion system (H1-T6SS) specialized secretion system, which delivers several virulence factors in both prokaryotic and eukaryotic cells during infection. Forms the spike at the tip of the elongating tube formed by haemolysin co-regulated protein 1/Hcp1. Allows the delivery of the Tse6 toxin to target cells where it exerts its toxicity. The chain is Type VI secretion system spike protein VgrG1a from Pseudomonas aeruginosa (strain ATCC 15692 / DSM 22644 / CIP 104116 / JCM 14847 / LMG 12228 / 1C / PRS 101 / PAO1).